The sequence spans 73 residues: MKMMIAIVFVSILLLMFSLSSTAMGMETEQQNMEERADVDFTGIADSIIKKIKETNAKPPARFDPATFGENED.

Positions Met-1 to Gly-25 are cleaved as a signal peptide.

As to expression, expressed by the venom gland.

It localises to the secreted. In terms of biological role, may potentiate the hypotensive effect of bradykinin. In Tityus serrulatus (Brazilian scorpion), this protein is Hypotensin-like peptide.